The chain runs to 331 residues: Holliday junction branch migration complex subunit RuvB (331 aa).

Positions 1–178 (MRNSIFEQEE…FGITLRLDFY (178 aa)) are large ATPase domain (RuvB-L). Residues L17, R18, G59, K62, T63, T64, 125-127 (EDY), R168, Y178, and R215 each bind ATP. A Mg(2+)-binding site is contributed by T63. A small ATPAse domain (RuvB-S) region spans residues 179 to 249 (TVSELLQLLQ…FADLALNKME (71 aa)). Positions 252–331 (QFGLDKLDYT…LSTINSARLP (80 aa)) are head domain (RuvB-H). Positions 307 and 312 each coordinate DNA.

It belongs to the RuvB family. Homohexamer. Forms an RuvA(8)-RuvB(12)-Holliday junction (HJ) complex. HJ DNA is sandwiched between 2 RuvA tetramers; dsDNA enters through RuvA and exits via RuvB. An RuvB hexamer assembles on each DNA strand where it exits the tetramer. Each RuvB hexamer is contacted by two RuvA subunits (via domain III) on 2 adjacent RuvB subunits; this complex drives branch migration. In the full resolvosome a probable DNA-RuvA(4)-RuvB(12)-RuvC(2) complex forms which resolves the HJ.

It is found in the cytoplasm. The enzyme catalyses ATP + H2O = ADP + phosphate + H(+). In terms of biological role, the RuvA-RuvB-RuvC complex processes Holliday junction (HJ) DNA during genetic recombination and DNA repair, while the RuvA-RuvB complex plays an important role in the rescue of blocked DNA replication forks via replication fork reversal (RFR). RuvA specifically binds to HJ cruciform DNA, conferring on it an open structure. The RuvB hexamer acts as an ATP-dependent pump, pulling dsDNA into and through the RuvAB complex. RuvB forms 2 homohexamers on either side of HJ DNA bound by 1 or 2 RuvA tetramers; 4 subunits per hexamer contact DNA at a time. Coordinated motions by a converter formed by DNA-disengaged RuvB subunits stimulates ATP hydrolysis and nucleotide exchange. Immobilization of the converter enables RuvB to convert the ATP-contained energy into a lever motion, pulling 2 nucleotides of DNA out of the RuvA tetramer per ATP hydrolyzed, thus driving DNA branch migration. The RuvB motors rotate together with the DNA substrate, which together with the progressing nucleotide cycle form the mechanistic basis for DNA recombination by continuous HJ branch migration. Branch migration allows RuvC to scan DNA until it finds its consensus sequence, where it cleaves and resolves cruciform DNA. The chain is Holliday junction branch migration complex subunit RuvB from Neorickettsia sennetsu (strain ATCC VR-367 / Miyayama) (Ehrlichia sennetsu).